Reading from the N-terminus, the 1166-residue chain is UDP-N-acetylglucosamine transferase subunit ALG13 (1166 aa).

Residues 1-125 are glycosyltransferase activity; it reads MKRAFVTVGT…LHKEGHLFYC (125 aa). A deubiquitinase activity region spans residues 126–394; that stretch reads TCRVLSCPAP…GSRRNKHHAL (269 aa). One can recognise an OTU domain in the interval 225 to 346; it reads LFRKVVAKDA…NGHYDSVYSK (122 aa). The For deubiquitinase activity role is filled by D233. C236 acts as the Nucleophile; for deubiquitinase activity in catalysis. The active-site For deubiquitinase activity is the H339. The tract at residues 393–438 is disordered; sequence ALTASVEGSSDQKSSTEDRTEEAAACSSAASTPEGNKQGTERQKVP. Residues 486 to 546 form the Tudor domain; the sequence is YYFLGDKCQV…RPVNQVALLP (61 aa). 3 stretches are compositionally biased toward pro residues: residues 921–930, 941–957, and 1004–1034; these read PPPLPPPPPA, PLPPPPPPPPPPPPPYS, and QPQPQPQPQPQPQPQPQPQPQQPQQQQPPPQ. Disordered stretches follow at residues 921 to 966 and 998 to 1056; these read PPPL…SDLP and QQQL…EQPL.

This sequence belongs to the glycosyltransferase 28 family. In terms of assembly, forms with ALG14 the active heterodimeric UDP-N-acetylglucosamine transferase complex. Not able to interact with ALG14 to form an active UDP-N-acetylglucosamine transferase complex.

It localises to the endoplasmic reticulum membrane. It catalyses the reaction an N-acetyl-alpha-D-glucosaminyl-diphospho-di-trans,poly-cis-dolichol + UDP-N-acetyl-alpha-D-glucosamine = an N,N'-diacetylchitobiosyl-diphospho-di-trans,poly-cis-dolichol + UDP + H(+). It functions in the pathway protein modification; protein glycosylation. Functionally, catalytic subunit of the UDP-N-acetylglucosamine transferase complex that operates in the biosynthetic pathway of dolichol-linked oligosaccharides, the glycan precursors employed in protein asparagine (N)-glycosylation. The assembly of dolichol-linked oligosaccharides begins on the cytosolic side of the endoplasmic reticulum membrane and finishes in its lumen. The sequential addition of sugars to dolichol pyrophosphate produces dolichol-linked oligosaccharides containing fourteen sugars, including two GlcNAcs, nine mannoses and three glucoses. Once assembled, the oligosaccharide is transferred from the lipid to nascent proteins by oligosaccharyltransferases. On the cytoplasmic face of the endoplasmic reticulum, the dimeric ALG13/ALG14 complex catalyzes the second step of dolichol pyrophosphate biosynthesis, transferring a beta1,4-linked N-acetylglucosamine (GlcNAc) from UDP-GlcNAc to GlcNAc-pyrophosphatedolichol (Gn-PDol) to produce N,N'-diacetylchitobiosyl diphosphodolichol. N,N'-diacetylchitobiosyl diphosphodolichol is a substrate for ALG1, the following enzyme in the biosynthetic pathway. Its function is as follows. No glycosyltransferase or deubiquitinase activity is detected for this potential multifunctional enzyme. The sequence is that of UDP-N-acetylglucosamine transferase subunit ALG13 from Mus musculus (Mouse).